A 238-amino-acid polypeptide reads, in one-letter code: tRNA (guanine-N(7)-)-methyltransferase (238 aa).

S-adenosyl-L-methionine is bound by residues Glu-70, Asp-95, Asp-122, and Asp-145. Residue Asp-145 is part of the active site. Substrate contacts are provided by residues Lys-149, Asp-181, and 216-219 (TKFE).

This sequence belongs to the class I-like SAM-binding methyltransferase superfamily. TrmB family.

It carries out the reaction guanosine(46) in tRNA + S-adenosyl-L-methionine = N(7)-methylguanosine(46) in tRNA + S-adenosyl-L-homocysteine. The protein operates within tRNA modification; N(7)-methylguanine-tRNA biosynthesis. Its function is as follows. Catalyzes the formation of N(7)-methylguanine at position 46 (m7G46) in tRNA. The protein is tRNA (guanine-N(7)-)-methyltransferase of Neisseria meningitidis serogroup B (strain ATCC BAA-335 / MC58).